A 482-amino-acid chain; its full sequence is DNA polymerase II small subunit (482 aa).

The protein belongs to the DNA polymerase delta/II small subunit family. Heterodimer of a large subunit and a small subunit.

The catalysed reaction is DNA(n) + a 2'-deoxyribonucleoside 5'-triphosphate = DNA(n+1) + diphosphate. The enzyme catalyses Exonucleolytic cleavage in the 3'- to 5'-direction to yield nucleoside 5'-phosphates.. Functionally, possesses two activities: a DNA synthesis (polymerase) and an exonucleolytic activity that degrades single-stranded DNA in the 3' to 5' direction. Has a template-primer preference which is characteristic of a replicative DNA polymerase. The protein is DNA polymerase II small subunit (polB) of Methanothermobacter thermautotrophicus (strain ATCC 29096 / DSM 1053 / JCM 10044 / NBRC 100330 / Delta H) (Methanobacterium thermoautotrophicum).